Consider the following 314-residue polypeptide: Peroxidase 2 (314 aa).

The N-terminal stretch at 1–23 (MASASSVSLMLLVAAAMASAASA) is a signal peptide. Gln-24 carries the pyrrolidone carboxylic acid modification. 4 disulfide bridges follow: Cys-34/Cys-109, Cys-67/Cys-72, Cys-115/Cys-310, and Cys-194/Cys-219. Residue His-65 is the Proton acceptor of the active site. Positions 66, 69, 71, 73, and 75 each coordinate Ca(2+). N-linked (GlcNAc...) asparagine glycosylation is present at Asn-148. Position 157 (Pro-157) interacts with substrate. The N-linked (GlcNAc...) asparagine glycan is linked to Asn-169. His-187 is a binding site for heme b. Thr-188 contacts Ca(2+). N-linked (GlcNAc...) asparagine glycosylation is present at Asn-203. The Ca(2+) site is built by Asp-234, Thr-237, and Asp-242. N-linked (GlcNAc...) asparagine glycans are attached at residues Asn-274 and Asn-309.

The protein belongs to the peroxidase family. Classical plant (class III) peroxidase subfamily. Ca(2+) serves as cofactor. Requires heme b as cofactor.

It localises to the secreted. The enzyme catalyses 2 a phenolic donor + H2O2 = 2 a phenolic radical donor + 2 H2O. Removal of H(2)O(2), oxidation of toxic reductants, biosynthesis and degradation of lignin, suberization, auxin catabolism, response to environmental stresses such as wounding, pathogen attack and oxidative stress. These functions might be dependent on each isozyme/isoform in each plant tissue. The polypeptide is Peroxidase 2 (PRX112) (Oryza sativa subsp. japonica (Rice)).